The following is a 1396-amino-acid chain: uncharacterized protein (1396 aa).

Ala-88 to Ser-95 provides a ligand contact to ATP. Disordered regions lie at residues Glu-146–Thr-165 and Lys-198–Leu-388. Residues Lys-198–Pro-221 show a composition bias toward low complexity. Residues Met-242–Ala-268 are compositionally biased toward basic and acidic residues. Positions Ser-286–Gly-300 are enriched in low complexity. A compositionally biased stretch (basic residues) spans Val-312–Arg-327. Phosphoserine occurs at positions 817 and 1083. Residues Pro-1113–Ser-1137 form a disordered region. Phosphoserine is present on residues Ser-1197 and Ser-1339. Residues Thr-1347 to Leu-1396 form a disordered region. Over residues Ser-1365–Ser-1376 the composition is skewed to low complexity. A compositionally biased stretch (basic and acidic residues) spans Ser-1386–Leu-1396.

This is an uncharacterized protein from Mus musculus (Mouse).